The chain runs to 77 residues: Cell division topological specificity factor (77 aa).

It belongs to the MinE family.

In terms of biological role, prevents the cell division inhibition by proteins MinC and MinD at internal division sites while permitting inhibition at polar sites. This ensures cell division at the proper site by restricting the formation of a division septum at the midpoint of the long axis of the cell. In Helicobacter pylori (strain Shi470), this protein is Cell division topological specificity factor.